A 540-amino-acid polypeptide reads, in one-letter code: Coiled-coil domain-containing protein 116 (540 aa).

Residues 79–102 adopt a coiled-coil conformation; sequence QVLDSLQTVVEQATECVATMKTEA. A disordered region spans residues 347–400; it reads PGNSDLQPSSKASLPTDREARGETCYSPTSASSPKTSHRKSKDRRGSPSNAVQM. 2 stretches are compositionally biased toward polar residues: residues 350-359 and 372-381; these read SDLQPSSKAS and YSPTSASSPK. Ser-393 is subject to Phosphoserine.

The protein resides in the cytoplasm. The protein localises to the cytoskeleton. Its subcellular location is the microtubule organizing center. It is found in the centrosome. This chain is Coiled-coil domain-containing protein 116 (Ccdc116), found in Rattus norvegicus (Rat).